The chain runs to 324 residues: Concanavalin B (324 aa).

The signal sequence occupies residues 1-25 (MGCERKALILMVVIWIMSFWTLSLA). A GH18 domain is found at 30-311 (TEIAVYWGQR…TNIIRYLNAT (282 aa)). Asparagine 309 carries an N-linked (GlcNAc...) asparagine glycan.

It belongs to the glycosyl hydrolase 18 family.

Its function is as follows. May act as a carbohydrate-binding protein. This is Concanavalin B from Canavalia ensiformis (Jack bean).